We begin with the raw amino-acid sequence, 281 residues long: Endochitinase At2g43610 (281 aa).

The first 28 residues, 1-28 (MATQNAILKKALIIFLFTLTIMTGTAFS), serve as a signal peptide directing secretion. Positions 29–66 (QNCGTNGCKGNMCCSRWGYCGTTKAYCGTGCQSGPCNS) constitute a Chitin-binding type-1 domain. 4 disulfides stabilise this stretch: Cys31-Cys42, Cys36-Cys48, Cys41-Cys55, and Cys59-Cys64. Residues 86-281 (GTIASVITPA…GVTPGTNLSC (196 aa)) are catalytic. Glu148 acts as the Proton donor in catalysis. Asn278 carries N-linked (GlcNAc...) asparagine glycosylation.

It belongs to the glycosyl hydrolase 19 family. Chitinase class I subfamily.

It catalyses the reaction Random endo-hydrolysis of N-acetyl-beta-D-glucosaminide (1-&gt;4)-beta-linkages in chitin and chitodextrins.. The polypeptide is Endochitinase At2g43610 (Arabidopsis thaliana (Mouse-ear cress)).